The chain runs to 205 residues: Probable GTP-binding protein EngB (205 aa).

The 174-residue stretch at 22 to 195 (NLPEVALVGR…LDLLDYFWNG (174 aa)) folds into the EngB-type G domain. GTP is bound by residues 30–37 (GRSNVGKS), 57–61 (GKTQT), 75–78 (DLPG), 142–145 (TKAD), and 174–176 (FSA). Residues Ser37 and Thr59 each coordinate Mg(2+).

It belongs to the TRAFAC class TrmE-Era-EngA-EngB-Septin-like GTPase superfamily. EngB GTPase family. The cofactor is Mg(2+).

Its function is as follows. Necessary for normal cell division and for the maintenance of normal septation. In Heliobacterium modesticaldum (strain ATCC 51547 / Ice1), this protein is Probable GTP-binding protein EngB.